Consider the following 218-residue polypeptide: MKFFVDSANIEEIQELQNLNLVDGVTTNPSLILKSGRNILEVTKEICTLVVHGPVSAEVAATEFEDIMKEAAVLANIADNICIKLPLTFDGLKACKALTAQGLKTNLTLCFSANQALLAAKAGATFISPFVGRLDDYGINGSDLLHEIRTIYNNYSFETQILAASIRTINHVKEAALSGADVATIPPTILKALIKHPLTEKGLQSFLEDWKKTGQNIA.

The active-site Schiff-base intermediate with substrate is the Lys84.

It belongs to the transaldolase family. Type 3B subfamily.

The protein localises to the cytoplasm. It carries out the reaction D-sedoheptulose 7-phosphate + D-glyceraldehyde 3-phosphate = D-erythrose 4-phosphate + beta-D-fructose 6-phosphate. Its pathway is carbohydrate degradation; pentose phosphate pathway; D-glyceraldehyde 3-phosphate and beta-D-fructose 6-phosphate from D-ribose 5-phosphate and D-xylulose 5-phosphate (non-oxidative stage): step 2/3. Its function is as follows. Transaldolase is important for the balance of metabolites in the pentose-phosphate pathway. The chain is Probable transaldolase from Bartonella henselae (strain ATCC 49882 / DSM 28221 / CCUG 30454 / Houston 1) (Rochalimaea henselae).